The following is a 505-amino-acid chain: Lysine--tRNA ligase (505 aa).

Mg(2+)-binding residues include Glu415 and Glu422.

The protein belongs to the class-II aminoacyl-tRNA synthetase family. Homodimer. Mg(2+) is required as a cofactor.

It localises to the cytoplasm. The enzyme catalyses tRNA(Lys) + L-lysine + ATP = L-lysyl-tRNA(Lys) + AMP + diphosphate. The protein is Lysine--tRNA ligase of Xanthomonas oryzae pv. oryzae (strain MAFF 311018).